We begin with the raw amino-acid sequence, 319 residues long: Acetyl esterase (319 aa).

The short motif at 91–93 (HGG) is the Involved in the stabilization of the negatively charged intermediate by the formation of the oxyanion hole element. Catalysis depends on residues serine 165, aspartate 262, and histidine 292.

It belongs to the 'GDXG' lipolytic enzyme family. Homodimer. Interacts with MalT and MelA.

The protein resides in the cytoplasm. In terms of biological role, displays esterase activity towards short chain fatty esters (acyl chain length of up to 8 carbons). Able to hydrolyze triacetylglycerol (triacetin) and tributyrylglycerol (tributyrin), but not trioleylglycerol (triolein) or cholesterol oleate. Negatively regulates MalT activity by antagonizing maltotriose binding. Inhibits MelA galactosidase activity. This is Acetyl esterase from Escherichia coli O17:K52:H18 (strain UMN026 / ExPEC).